The primary structure comprises 338 residues: Holliday junction branch migration complex subunit RuvB (338 aa).

A large ATPase domain (RuvB-L) region spans residues 1-182 (MDDRMVDQSQ…FGVHLRLEYY (182 aa)). ATP contacts are provided by residues leucine 21, arginine 22, glycine 63, lysine 66, threonine 67, threonine 68, 129 to 131 (EDF), arginine 172, tyrosine 182, and arginine 219. Threonine 67 is a Mg(2+) binding site. Positions 183–253 (KESELKDIII…TTKRALQLLQ (71 aa)) are small ATPAse domain (RuvB-S). Residues 256–338 (DYGLDYIDHK…KNGKRDNFEY (83 aa)) form a head domain (RuvB-H) region. Residues arginine 292, arginine 311, and arginine 316 each coordinate DNA.

It belongs to the RuvB family. As to quaternary structure, homohexamer. Forms an RuvA(8)-RuvB(12)-Holliday junction (HJ) complex. HJ DNA is sandwiched between 2 RuvA tetramers; dsDNA enters through RuvA and exits via RuvB. An RuvB hexamer assembles on each DNA strand where it exits the tetramer. Each RuvB hexamer is contacted by two RuvA subunits (via domain III) on 2 adjacent RuvB subunits; this complex drives branch migration. In the full resolvosome a probable DNA-RuvA(4)-RuvB(12)-RuvC(2) complex forms which resolves the HJ.

The protein localises to the cytoplasm. The catalysed reaction is ATP + H2O = ADP + phosphate + H(+). The RuvA-RuvB-RuvC complex processes Holliday junction (HJ) DNA during genetic recombination and DNA repair, while the RuvA-RuvB complex plays an important role in the rescue of blocked DNA replication forks via replication fork reversal (RFR). RuvA specifically binds to HJ cruciform DNA, conferring on it an open structure. The RuvB hexamer acts as an ATP-dependent pump, pulling dsDNA into and through the RuvAB complex. RuvB forms 2 homohexamers on either side of HJ DNA bound by 1 or 2 RuvA tetramers; 4 subunits per hexamer contact DNA at a time. Coordinated motions by a converter formed by DNA-disengaged RuvB subunits stimulates ATP hydrolysis and nucleotide exchange. Immobilization of the converter enables RuvB to convert the ATP-contained energy into a lever motion, pulling 2 nucleotides of DNA out of the RuvA tetramer per ATP hydrolyzed, thus driving DNA branch migration. The RuvB motors rotate together with the DNA substrate, which together with the progressing nucleotide cycle form the mechanistic basis for DNA recombination by continuous HJ branch migration. Branch migration allows RuvC to scan DNA until it finds its consensus sequence, where it cleaves and resolves cruciform DNA. The polypeptide is Holliday junction branch migration complex subunit RuvB (Staphylococcus carnosus (strain TM300)).